The following is a 159-amino-acid chain: uncharacterized protein (159 aa).

The signal sequence occupies residues 1-20 (MKKIIAMSLLMFSVVMSVNA).

This is an uncharacterized protein from Pasteurella multocida (strain Pm70).